Here is a 368-residue protein sequence, read N- to C-terminus: Isocitrate dehydrogenase [NAD] regulatory subunit 3, mitochondrial (368 aa).

Residues 1-26 (MARRSVSIFNRLLANPPSPFTSLSRS) constitute a mitochondrion transit peptide.

This sequence belongs to the isocitrate and isopropylmalate dehydrogenases family. As to quaternary structure, heterooligomer of catalytic and regulatory subunits. Interacts with 14-3-3-like proteins GRF1 GRF3 and GRF8. In terms of tissue distribution, mainly expressed at a low level in pollen.

Its subcellular location is the mitochondrion. Its function is as follows. Performs an essential role in the oxidative function of the citric acid cycle. This Arabidopsis thaliana (Mouse-ear cress) protein is Isocitrate dehydrogenase [NAD] regulatory subunit 3, mitochondrial (IDH3).